Here is a 360-residue protein sequence, read N- to C-terminus: Membrane-bound lytic murein transglycosylase C (360 aa).

The signal sequence occupies residues 1-16 (MKKFFALALVAPLLIS). C17 carries the N-palmitoyl cysteine lipid modification. A lipid anchor (S-diacylglycerol cysteine) is attached at C17.

This sequence belongs to the transglycosylase Slt family.

The protein localises to the cell outer membrane. It carries out the reaction Exolytic cleavage of the (1-&gt;4)-beta-glycosidic linkage between N-acetylmuramic acid (MurNAc) and N-acetylglucosamine (GlcNAc) residues in peptidoglycan, from either the reducing or the non-reducing ends of the peptidoglycan chains, with concomitant formation of a 1,6-anhydrobond in the MurNAc residue.. Its function is as follows. Murein-degrading enzyme. May play a role in recycling of muropeptides during cell elongation and/or cell division. This chain is Membrane-bound lytic murein transglycosylase C, found in Citrobacter koseri (strain ATCC BAA-895 / CDC 4225-83 / SGSC4696).